The following is a 248-amino-acid chain: Triosephosphate isomerase (248 aa).

9 to 11 (NWK) serves as a coordination point for substrate. The active-site Electrophile is H94. Catalysis depends on E164, which acts as the Proton acceptor. Substrate is bound by residues G170, S209, and 230–231 (GG).

The protein belongs to the triosephosphate isomerase family. In terms of assembly, homodimer.

The protein resides in the cytoplasm. The catalysed reaction is D-glyceraldehyde 3-phosphate = dihydroxyacetone phosphate. The protein operates within carbohydrate biosynthesis; gluconeogenesis. Its pathway is carbohydrate degradation; glycolysis; D-glyceraldehyde 3-phosphate from glycerone phosphate: step 1/1. Its function is as follows. Involved in the gluconeogenesis. Catalyzes stereospecifically the conversion of dihydroxyacetone phosphate (DHAP) to D-glyceraldehyde-3-phosphate (G3P). This Hahella chejuensis (strain KCTC 2396) protein is Triosephosphate isomerase.